Here is a 29-residue protein sequence, read N- to C-terminus: Glucagon (29 aa).

Belongs to the glucagon family.

It is found in the secreted. In terms of biological role, glucagon plays a key role in glucose metabolism and homeostasis. Regulates blood glucose by increasing gluconeogenesis and decreasing glycolysis. This chain is Glucagon (gcg), found in Callorhinchus milii (Ghost shark).